The following is a 295-amino-acid chain: Phosphatidylserine decarboxylase proenzyme (295 aa).

Active-site charge relay system; for autoendoproteolytic cleavage activity residues include D113, H169, and S256. S256 serves as the catalytic Schiff-base intermediate with substrate; via pyruvic acid; for decarboxylase activity. Position 256 is a pyruvic acid (Ser); by autocatalysis (S256).

It belongs to the phosphatidylserine decarboxylase family. PSD-B subfamily. Prokaryotic type II sub-subfamily. In terms of assembly, heterodimer of a large membrane-associated beta subunit and a small pyruvoyl-containing alpha subunit. Requires pyruvate as cofactor. Post-translationally, is synthesized initially as an inactive proenzyme. Formation of the active enzyme involves a self-maturation process in which the active site pyruvoyl group is generated from an internal serine residue via an autocatalytic post-translational modification. Two non-identical subunits are generated from the proenzyme in this reaction, and the pyruvate is formed at the N-terminus of the alpha chain, which is derived from the carboxyl end of the proenzyme. The autoendoproteolytic cleavage occurs by a canonical serine protease mechanism, in which the side chain hydroxyl group of the serine supplies its oxygen atom to form the C-terminus of the beta chain, while the remainder of the serine residue undergoes an oxidative deamination to produce ammonia and the pyruvoyl prosthetic group on the alpha chain. During this reaction, the Ser that is part of the protease active site of the proenzyme becomes the pyruvoyl prosthetic group, which constitutes an essential element of the active site of the mature decarboxylase.

It is found in the cell membrane. It carries out the reaction a 1,2-diacyl-sn-glycero-3-phospho-L-serine + H(+) = a 1,2-diacyl-sn-glycero-3-phosphoethanolamine + CO2. The protein operates within phospholipid metabolism; phosphatidylethanolamine biosynthesis; phosphatidylethanolamine from CDP-diacylglycerol: step 2/2. Functionally, catalyzes the formation of phosphatidylethanolamine (PtdEtn) from phosphatidylserine (PtdSer). This chain is Phosphatidylserine decarboxylase proenzyme, found in Clostridium botulinum (strain Kyoto / Type A2).